The chain runs to 479 residues: RAC-gamma serine/threonine-protein kinase (479 aa).

N-acetylserine is present on S2. The region spanning 5-107 (TIVKEDWVQK…WTEAIQAVAD (103 aa)) is the PH domain. An intrachain disulfide couples C59 to C76. Positions 148 to 405 (FDYLKLLGKG…PKEIMRHSFF (258 aa)) constitute a Protein kinase domain. ATP contacts are provided by residues 154–162 (LGKGTFGKV) and K177. The active-site Proton acceptor is the D271. Residues C293 and C307 are joined by a disulfide bond. O-linked (GlcNAc) threonine glycosylation is present at T302. The residue at position 305 (T305) is a Phosphothreonine; by PDPK1. The O-linked (GlcNAc) threonine glycan is linked to T309. An AGC-kinase C-terminal domain is found at 406-479 (SGVNWQDVYD…QFSYSASGRE (74 aa)). The segment at 446–479 (ITPPEKDDDDGMDCMDNERRPHFPQFSYSASGRE) is disordered. At T447 the chain carries Phosphothreonine. Acidic residues predominate over residues 451 to 460 (KDDDDGMDCM). Residue S472 is modified to Phosphoserine; by PKC/PRKCZ. O-linked (GlcNAc) serine; alternate glycosylation occurs at S472.

Belongs to the protein kinase superfamily. AGC Ser/Thr protein kinase family. RAC subfamily. Interacts (via PH domain) with TCL1A; this enhances AKT3 phosphorylation and activation. Interacts with TRAF6. Interacts with KCTD20. Interacts with BTBD10. Post-translationally, phosphorylation on Thr-305 and Ser-472 is required for full activity. Phosphorylation of the activation loop at Thr-305 by PDPK1/PDK1 is a prerequisite for full activation. Phosphorylation at Ser-472 by mTORC2 in response to growth factors plays a key role in AKT1 activation by facilitating subsequent phosphorylation of the activation loop by PDPK1/PDK1. In terms of processing, ubiquitinated. When fully phosphorylated and translocated into the nucleus, undergoes 'Lys-48'-polyubiquitination catalyzed by TTC3, leading to its degradation by the proteasome. O-GlcNAcylation at Thr-302 and Thr-309 inhibits activating phosphorylation at Thr-305 via disrupting the interaction between AKT and PDPK1/PDK1.

It localises to the nucleus. Its subcellular location is the cytoplasm. The protein localises to the membrane. It catalyses the reaction L-seryl-[protein] + ATP = O-phospho-L-seryl-[protein] + ADP + H(+). The catalysed reaction is L-threonyl-[protein] + ATP = O-phospho-L-threonyl-[protein] + ADP + H(+). Its activity is regulated as follows. Two specific sites, one in the kinase domain (Thr-305) and the other in the C-terminal regulatory region (Ser-472), need to be phosphorylated for its full activation. IGF-1 leads to the activation of AKT3, which may play a role in regulating cell survival. AKT3 is one of 3 closely related serine/threonine-protein kinases (AKT1, AKT2 and AKT3) called the AKT kinase, and which regulate many processes including metabolism, proliferation, cell survival, growth and angiogenesis. This is mediated through serine and/or threonine phosphorylation of a range of downstream substrates. Over 100 substrate candidates have been reported so far, but for most of them, no isoform specificity has been reported. AKT3 is the least studied AKT isoform. It plays an important role in brain development and is crucial for the viability of malignant glioma cells. AKT3 isoform may also be the key molecule in up-regulation and down-regulation of MMP13 via IL13. Required for the coordination of mitochondrial biogenesis with growth factor-induced increases in cellular energy demands. Down-regulation by RNA interference reduces the expression of the phosphorylated form of BAD, resulting in the induction of caspase-dependent apoptosis. The sequence is that of RAC-gamma serine/threonine-protein kinase (Akt3) from Rattus norvegicus (Rat).